A 222-amino-acid polypeptide reads, in one-letter code: UPF0128 protein PF1488 (222 aa).

The protein belongs to the UPF0128 family.

The sequence is that of UPF0128 protein PF1488 from Pyrococcus furiosus (strain ATCC 43587 / DSM 3638 / JCM 8422 / Vc1).